The primary structure comprises 342 residues: MEERFLTPKDIGEEQLTRTLRPQRLDEYIGQRNVKQRLKISIEAAKVRNEALDHVLLAGPPGLGKTTLAHIIANEMGTNIYVTSGPVIEKQGDLAAILTSLEEGDVLFIDEIHRLGRAIEEILYSAMEDFKLDIMIGKGPSARSIRLDLAPFTLVGATTRSGLIGAPLRNRFGMVLELEFYTPDELKQIIKRSARLLEVKIDDEAAELLASRSRGTPRIANRLLRRVRDLATVDGTGKILSKTVEDAMKIMGIDAEGLDDMDRKILRVLIENYEGGPAGLKAIAASVGIEADTISEVYEPYLLQSGFIVRTNRGRMATKKAYRHLGIARFNGIGPLWDSTGD.

The tract at residues 1–181 is large ATPase domain (RuvB-L); sequence MEERFLTPKD…FGMVLELEFY (181 aa). ATP contacts are provided by residues Leu-20, Arg-21, Gly-62, Lys-65, Thr-66, Thr-67, 128–130, Arg-171, Tyr-181, and Arg-218; that span reads EDF. Thr-66 contacts Mg(2+). The segment at 182-252 is small ATPAse domain (RuvB-S); it reads TPDELKQIIK…TVEDAMKIMG (71 aa). The head domain (RuvB-H) stretch occupies residues 255-342; that stretch reads AEGLDDMDRK…IGPLWDSTGD (88 aa). Residues Arg-310 and Arg-315 each coordinate DNA.

It belongs to the RuvB family. Homohexamer. Forms an RuvA(8)-RuvB(12)-Holliday junction (HJ) complex. HJ DNA is sandwiched between 2 RuvA tetramers; dsDNA enters through RuvA and exits via RuvB. An RuvB hexamer assembles on each DNA strand where it exits the tetramer. Each RuvB hexamer is contacted by two RuvA subunits (via domain III) on 2 adjacent RuvB subunits; this complex drives branch migration. In the full resolvosome a probable DNA-RuvA(4)-RuvB(12)-RuvC(2) complex forms which resolves the HJ.

It localises to the cytoplasm. The enzyme catalyses ATP + H2O = ADP + phosphate + H(+). Functionally, the RuvA-RuvB-RuvC complex processes Holliday junction (HJ) DNA during genetic recombination and DNA repair, while the RuvA-RuvB complex plays an important role in the rescue of blocked DNA replication forks via replication fork reversal (RFR). RuvA specifically binds to HJ cruciform DNA, conferring on it an open structure. The RuvB hexamer acts as an ATP-dependent pump, pulling dsDNA into and through the RuvAB complex. RuvB forms 2 homohexamers on either side of HJ DNA bound by 1 or 2 RuvA tetramers; 4 subunits per hexamer contact DNA at a time. Coordinated motions by a converter formed by DNA-disengaged RuvB subunits stimulates ATP hydrolysis and nucleotide exchange. Immobilization of the converter enables RuvB to convert the ATP-contained energy into a lever motion, pulling 2 nucleotides of DNA out of the RuvA tetramer per ATP hydrolyzed, thus driving DNA branch migration. The RuvB motors rotate together with the DNA substrate, which together with the progressing nucleotide cycle form the mechanistic basis for DNA recombination by continuous HJ branch migration. Branch migration allows RuvC to scan DNA until it finds its consensus sequence, where it cleaves and resolves cruciform DNA. The chain is Holliday junction branch migration complex subunit RuvB from Kosmotoga olearia (strain ATCC BAA-1733 / DSM 21960 / TBF 19.5.1).